We begin with the raw amino-acid sequence, 238 residues long: Probable transcriptional regulatory protein SERP0322 (238 aa).

Belongs to the TACO1 family. YeeN subfamily.

It is found in the cytoplasm. The chain is Probable transcriptional regulatory protein SERP0322 from Staphylococcus epidermidis (strain ATCC 35984 / DSM 28319 / BCRC 17069 / CCUG 31568 / BM 3577 / RP62A).